The primary structure comprises 27 residues: uncharacterized protein (27 aa).

It localises to the plastid. Its subcellular location is the chloroplast. This is an uncharacterized protein from Marchantia polymorpha (Common liverwort).